Consider the following 222-residue polypeptide: Protein GrpE (222 aa).

The protein belongs to the GrpE family. Homodimer.

It localises to the cytoplasm. Functionally, participates actively in the response to hyperosmotic and heat shock by preventing the aggregation of stress-denatured proteins, in association with DnaK and GrpE. It is the nucleotide exchange factor for DnaK and may function as a thermosensor. Unfolded proteins bind initially to DnaJ; upon interaction with the DnaJ-bound protein, DnaK hydrolyzes its bound ATP, resulting in the formation of a stable complex. GrpE releases ADP from DnaK; ATP binding to DnaK triggers the release of the substrate protein, thus completing the reaction cycle. Several rounds of ATP-dependent interactions between DnaJ, DnaK and GrpE are required for fully efficient folding. In Bartonella bacilliformis (strain ATCC 35685 / KC583 / Herrer 020/F12,63), this protein is Protein GrpE.